The sequence spans 308 residues: D-alanine--D-alanine ligase (308 aa).

The region spanning 106–305 (KMLWKAFGLP…FEQLVVKILE (200 aa)) is the ATP-grasp domain. ATP is bound at residue 136–191 (VEKLGLPLMVKPSLEGSSVGLTKVNAIDDLKSAVEFALQYDETVLIEEWLSGDELT). The Mg(2+) site is built by aspartate 259, glutamate 272, and asparagine 274.

The protein belongs to the D-alanine--D-alanine ligase family. It depends on Mg(2+) as a cofactor. Requires Mn(2+) as cofactor.

The protein resides in the cytoplasm. The catalysed reaction is 2 D-alanine + ATP = D-alanyl-D-alanine + ADP + phosphate + H(+). It functions in the pathway cell wall biogenesis; peptidoglycan biosynthesis. Cell wall formation. This is D-alanine--D-alanine ligase from Histophilus somni (strain 2336) (Haemophilus somnus).